We begin with the raw amino-acid sequence, 263 residues long: Glutamate 5-kinase (263 aa).

Lys15 lines the ATP pocket. Residues Ser55, Asp142, and Asn154 each contribute to the substrate site. Residues 174 to 175 (SD) and 216 to 222 (TGGIETK) each bind ATP.

Belongs to the glutamate 5-kinase family.

The protein localises to the cytoplasm. The enzyme catalyses L-glutamate + ATP = L-glutamyl 5-phosphate + ADP. It participates in amino-acid biosynthesis; L-proline biosynthesis; L-glutamate 5-semialdehyde from L-glutamate: step 1/2. In terms of biological role, catalyzes the transfer of a phosphate group to glutamate to form L-glutamate 5-phosphate. This chain is Glutamate 5-kinase, found in Alkaliphilus oremlandii (strain OhILAs) (Clostridium oremlandii (strain OhILAs)).